The sequence spans 339 residues: Ectoine/5-hydroxyectoine-binding periplasmic protein UehA (339 aa).

Positions 1 to 20 are cleaved as a signal peptide; it reads MAQSITFTFGAVAAAGIALA. Residues E36, R171, N211, F215, and F236 each contribute to the L-ectoine site. A disulfide bridge links C162 with C303.

It belongs to the bacterial solute-binding protein 7 family. Monomer. The complex comprises the extracytoplasmic solute receptor protein UehA, and the two transmembrane proteins UehB and UehC.

The protein localises to the periplasm. Functionally, part of the tripartite ATP-independent periplasmic (TRAP) transport system UehABC, which imports both ectoine and 5-hydroxyectoine as nutrients, and not as osmoprotectants. UehA binds both ectoine and 5-hydroxyectoine with high specificity and affinity. The polypeptide is Ectoine/5-hydroxyectoine-binding periplasmic protein UehA (Ruegeria pomeroyi (strain ATCC 700808 / DSM 15171 / DSS-3) (Silicibacter pomeroyi)).